Here is a 242-residue protein sequence, read N- to C-terminus: Small ribosomal subunit protein uS3 (242 aa).

The KH type-2 domain maps to 39 to 109 (IRQYVEKNLA…QIRINVIEVA (71 aa)). The tract at residues 220 to 242 (VPAQAPRRQQRRRQQFEDRSSEG) is disordered. Positions 233 to 242 (QQFEDRSSEG) are enriched in basic and acidic residues.

The protein belongs to the universal ribosomal protein uS3 family. In terms of assembly, part of the 30S ribosomal subunit. Forms a tight complex with proteins S10 and S14.

Binds the lower part of the 30S subunit head. Binds mRNA in the 70S ribosome, positioning it for translation. The sequence is that of Small ribosomal subunit protein uS3 from Microcystis aeruginosa (strain NIES-843 / IAM M-2473).